The sequence spans 115 residues: NADH-ubiquinone oxidoreductase chain 3 (115 aa).

Helical transmembrane passes span 4–24 (LVTM…AFWL), 55–75 (FFLV…LLPM), and 86–106 (TMTL…AYEW).

This sequence belongs to the complex I subunit 3 family. In terms of assembly, core subunit of respiratory chain NADH dehydrogenase (Complex I) which is composed of 45 different subunits. Interacts with TMEM186. Interacts with TMEM242.

The protein localises to the mitochondrion inner membrane. It catalyses the reaction a ubiquinone + NADH + 5 H(+)(in) = a ubiquinol + NAD(+) + 4 H(+)(out). In terms of biological role, core subunit of the mitochondrial membrane respiratory chain NADH dehydrogenase (Complex I) which catalyzes electron transfer from NADH through the respiratory chain, using ubiquinone as an electron acceptor. Essential for the catalytic activity of complex I. In Nelsonia neotomodon (Diminutive woodrat), this protein is NADH-ubiquinone oxidoreductase chain 3.